Here is a 272-residue protein sequence, read N- to C-terminus: Isoprenyl transferase (272 aa).

Residue D32 is part of the active site. A Mg(2+)-binding site is contributed by D32. Substrate-binding positions include 33 to 36 (GNGR), W37, R45, H49, and 77 to 79 (STE). Catalysis depends on N80, which acts as the Proton acceptor. Substrate contacts are provided by residues W81, R83, R200, and 206–208 (RIS). E219 is a Mg(2+) binding site.

This sequence belongs to the UPP synthase family. As to quaternary structure, homodimer. Mg(2+) serves as cofactor.

Catalyzes the condensation of isopentenyl diphosphate (IPP) with allylic pyrophosphates generating different type of terpenoids. This is Isoprenyl transferase from Prochlorococcus marinus subsp. pastoris (strain CCMP1986 / NIES-2087 / MED4).